Consider the following 78-residue polypeptide: MGSLSIWHWIVVVAVILLLFGRGKISDLMGDVAQGIKAFKKGMKDDEKTAEKPEPVKTINHNADGSGAARSDTGSKVI.

The chain crosses the membrane as a helical span at residues 1–21; sequence MGSLSIWHWIVVVAVILLLFG. Basic and acidic residues predominate over residues 43 to 55; the sequence is MKDDEKTAEKPEP. Residues 43–78 are disordered; that stretch reads MKDDEKTAEKPEPVKTINHNADGSGAARSDTGSKVI.

Belongs to the TatA/E family. In terms of assembly, the Tat system comprises two distinct complexes: a TatABC complex, containing multiple copies of TatA, TatB and TatC subunits, and a separate TatA complex, containing only TatA subunits. Substrates initially bind to the TatABC complex, which probably triggers association of the separate TatA complex to form the active translocon.

It localises to the cell inner membrane. Functionally, part of the twin-arginine translocation (Tat) system that transports large folded proteins containing a characteristic twin-arginine motif in their signal peptide across membranes. TatA could form the protein-conducting channel of the Tat system. This Nitrobacter winogradskyi (strain ATCC 25391 / DSM 10237 / CIP 104748 / NCIMB 11846 / Nb-255) protein is Sec-independent protein translocase protein TatA.